The primary structure comprises 450 residues: Chromosomal replication initiator protein DnaA (450 aa).

The segment at M1 to I73 is domain I, interacts with DnaA modulators. Residues I73–L104 are domain II. The segment at A105–A326 is domain III, AAA+ region. ATP is bound by residues G149, G151, K152, and T153. Residues V327 to R450 are domain IV, binds dsDNA.

This sequence belongs to the DnaA family. As to quaternary structure, oligomerizes as a right-handed, spiral filament on DNA at oriC.

Its subcellular location is the cytoplasm. Its function is as follows. Plays an essential role in the initiation and regulation of chromosomal replication. ATP-DnaA binds to the origin of replication (oriC) to initiate formation of the DNA replication initiation complex once per cell cycle. Binds the DnaA box (a 9 base pair repeat at the origin) and separates the double-stranded (ds)DNA. Forms a right-handed helical filament on oriC DNA; dsDNA binds to the exterior of the filament while single-stranded (ss)DNA is stabiized in the filament's interior. The ATP-DnaA-oriC complex binds and stabilizes one strand of the AT-rich DNA unwinding element (DUE), permitting loading of DNA polymerase. After initiation quickly degrades to an ADP-DnaA complex that is not apt for DNA replication. Binds acidic phospholipids. The sequence is that of Chromosomal replication initiator protein DnaA from Spiroplasma citri.